The primary structure comprises 403 residues: DNA replication and repair protein RecF (403 aa).

30 to 37 lines the ATP pocket; sequence GSNGLGKT.

The protein belongs to the RecF family.

It is found in the cytoplasm. The RecF protein is involved in DNA metabolism; it is required for DNA replication and normal SOS inducibility. RecF binds preferentially to single-stranded, linear DNA. It also seems to bind ATP. This chain is DNA replication and repair protein RecF, found in Bifidobacterium adolescentis (strain ATCC 15703 / DSM 20083 / NCTC 11814 / E194a).